The following is a 277-amino-acid chain: uncharacterized protein (277 aa).

This is an uncharacterized protein from Acanthamoeba polyphaga mimivirus (APMV).